We begin with the raw amino-acid sequence, 276 residues long: Transcriptional antiactivator ExsD (276 aa).

As to quaternary structure, can form homotrimer. Interacts with ExsA; this interaction inhibits ExsA activity. Interacts with ExsC; this interaction dissociates the ExsD-ExsA complex.

Functionally, negative regulator of the type III secretion system regulon. Acts by disrupting transcriptional activator ExsA self-association and DNA-binding activity in absence of inducing signals. Upon host cell contact, this interaction is disrupted by the anti-antiactivator protein ExsC leading to ExsA activation. This chain is Transcriptional antiactivator ExsD (exsD), found in Pseudomonas aeruginosa (strain ATCC 15692 / DSM 22644 / CIP 104116 / JCM 14847 / LMG 12228 / 1C / PRS 101 / PAO1).